Consider the following 506-residue polypeptide: Aldehyde dehydrogenase (506 aa).

G218–G224 provides a ligand contact to NAD(+). Active-site residues include E262 and C301.

This sequence belongs to the aldehyde dehydrogenase family.

It catalyses the reaction an aldehyde + NAD(+) + H2O = a carboxylate + NADH + 2 H(+). In Rhodospirillum rubrum (strain ATCC 11170 / ATH 1.1.1 / DSM 467 / LMG 4362 / NCIMB 8255 / S1), this protein is Aldehyde dehydrogenase.